A 149-amino-acid polypeptide reads, in one-letter code: Early lymphoid activation gene protein (149 aa).

In terms of tissue distribution, expressed in heart, kidney, lung, and skeletal muscle, with lower levels in pancreas and liver.

Its function is as follows. May function as an early signal that helps mediate the activation of T-cells. This is Early lymphoid activation gene protein (DIAPH2-AS1) from Homo sapiens (Human).